The following is a 149-amino-acid chain: F420H(2)-dependent quinone reductase MT1299 (149 aa).

Coenzyme F420-(gamma-Glu)n contacts are provided by residues 48–50, 54–59, 70–73, 81–85, and Y130; these read AKT, RTTSLT, VASK, and GWYHN.

Belongs to the F420H(2)-dependent quinone reductase family.

The protein localises to the cell membrane. The enzyme catalyses oxidized coenzyme F420-(gamma-L-Glu)(n) + a quinol + H(+) = reduced coenzyme F420-(gamma-L-Glu)(n) + a quinone. Its function is as follows. Involved in a F420-dependent anti-oxidant mechanism that protects M.tuberculosis against oxidative stress and bactericidal agents. Catalyzes the F420H(2)-dependent two-electron reduction of quinones to dihydroquinones, thereby preventing the formation of cytotoxic semiquinones obtained by the one-electron reduction pathway. In vitro, catalyzes the reduction of menadione to menadiol; since menaquinone is the sole quinone electron carrier in the respiratory chain in M.tuberculosis, the physiological electron acceptor for Fqr-mediated F420H(2) oxidation is therefore likely to be the endogenous menaquinone found in the membrane fraction of M.tuberculosis. The polypeptide is F420H(2)-dependent quinone reductase MT1299 (Mycobacterium tuberculosis (strain CDC 1551 / Oshkosh)).